Here is a 149-residue protein sequence, read N- to C-terminus: Protein AIM7 (149 aa).

At S2 the chain carries N-acetylserine. Residues 3–147 (NLYKIGTETR…DVEELREQLE (145 aa)) enclose the ADF-H domain. Position 137 is a phosphoserine (S137).

Belongs to the actin-binding proteins ADF family. GMF subfamily.

It is found in the cytoplasm. The protein resides in the nucleus. In terms of biological role, may be involved in mitochondrial organization and biogenesis. The chain is Protein AIM7 (AIM7) from Saccharomyces cerevisiae (strain ATCC 204508 / S288c) (Baker's yeast).